Reading from the N-terminus, the 598-residue chain is DNA mismatch repair protein MutL (598 aa).

It belongs to the DNA mismatch repair MutL/HexB family.

Functionally, this protein is involved in the repair of mismatches in DNA. It is required for dam-dependent methyl-directed DNA mismatch repair. May act as a 'molecular matchmaker', a protein that promotes the formation of a stable complex between two or more DNA-binding proteins in an ATP-dependent manner without itself being part of a final effector complex. The protein is DNA mismatch repair protein MutL of Geotalea daltonii (strain DSM 22248 / JCM 15807 / FRC-32) (Geobacter daltonii).